Here is a 285-residue protein sequence, read N- to C-terminus: Chemotaxis protein LafT (285 aa).

Helical transmembrane passes span 4 to 23 (FLGV…WAGG), 34 to 51 (FLII…GNPP), 171 to 191 (ALPG…MQAI), and 201 to 222 (HVAA…GLDP). Residues 223-285 (LSNAMAQRVK…MEKWLAEQEG (63 aa)) lie on the Cytoplasmic side of the membrane.

It belongs to the MotA family.

It localises to the cell inner membrane. Required for rotation of the flagellar motor. Probable transmembrane proton channel. In Vibrio parahaemolyticus serotype O3:K6 (strain RIMD 2210633), this protein is Chemotaxis protein LafT (lafT).